The sequence spans 165 residues: MRSAARVSRSNSHPRTRHPTRENEGTTWGSQPSRTERDGDRKCPPSILRPRRQECGCHGGEPQKTSRHVRFREPLEVAVHYIARKDTTAAIKVPSRPASHGGSPLQPASCSGSLFLWLTLCALLGVVLVLYCGQAKRVTAALEDLLAQLLALILRLWRVVLACWH.

The interval methionine 1–isoleucine 47 is disordered. Over residues arginine 34–cysteine 43 the composition is skewed to basic and acidic residues. A helical transmembrane segment spans residues glycine 112–cysteine 132.

In terms of tissue distribution, predominantly expressed in white adipose tissue (at protein level) and brown adipose tissue. Also detected in heart.

The protein resides in the cell membrane. This chain is Nutritionally-regulated adipose and cardiac-enriched protein (Nrac), found in Mus musculus (Mouse).